Consider the following 169-residue polypeptide: S-ribosylhomocysteine lyase (169 aa).

His-54, His-58, and Cys-128 together coordinate Fe cation.

The protein belongs to the LuxS family. As to quaternary structure, homodimer. It depends on Fe cation as a cofactor.

It catalyses the reaction S-(5-deoxy-D-ribos-5-yl)-L-homocysteine = (S)-4,5-dihydroxypentane-2,3-dione + L-homocysteine. In terms of biological role, involved in the synthesis of autoinducer 2 (AI-2) which is secreted by bacteria and is used to communicate both the cell density and the metabolic potential of the environment. The regulation of gene expression in response to changes in cell density is called quorum sensing. Catalyzes the transformation of S-ribosylhomocysteine (RHC) to homocysteine (HC) and 4,5-dihydroxy-2,3-pentadione (DPD). The polypeptide is S-ribosylhomocysteine lyase (Psychromonas ingrahamii (strain DSM 17664 / CCUG 51855 / 37)).